An 836-amino-acid polypeptide reads, in one-letter code: Subtilisin-like protease PIMMS2 (836 aa).

Active-site charge relay system residues include aspartate 155, histidine 222, and serine 414. Residues 802–836 (EKKNKYNNSVLKRNEMKSHNNSQKTPKIIPRKYSR) are disordered.

It belongs to the peptidase S8 family.

Its subcellular location is the cell membrane. It carries out the reaction Hydrolysis of proteins with broad specificity for peptide bonds, and a preference for a large uncharged residue in P1. Hydrolyzes peptide amides.. In terms of biological role, probable serine protease which plays a role in ookinete traversal of the mosquito host midgut epithelium. The sequence is that of Subtilisin-like protease PIMMS2 from Plasmodium berghei (strain Anka).